We begin with the raw amino-acid sequence, 614 residues long: Aspartate--tRNA ligase (614 aa).

Glu-174 provides a ligand contact to L-aspartate. The segment at 198-201 (QLFK) is aspartate. Arg-220 serves as a coordination point for L-aspartate. ATP-binding positions include 220–222 (RDE) and Gln-229. Residue His-448 coordinates L-aspartate. Glu-482 is a binding site for ATP. L-aspartate is bound at residue Arg-489. Residue 534–537 (GLDR) participates in ATP binding. Residues 587–614 (YEDSVKETEQRLEKEAQEDADKNSTWDE) are disordered.

This sequence belongs to the class-II aminoacyl-tRNA synthetase family. Type 1 subfamily. In terms of assembly, homodimer.

The protein resides in the cytoplasm. The catalysed reaction is tRNA(Asp) + L-aspartate + ATP = L-aspartyl-tRNA(Asp) + AMP + diphosphate. Catalyzes the attachment of L-aspartate to tRNA(Asp) in a two-step reaction: L-aspartate is first activated by ATP to form Asp-AMP and then transferred to the acceptor end of tRNA(Asp). The sequence is that of Aspartate--tRNA ligase from Lactobacillus johnsonii (strain CNCM I-12250 / La1 / NCC 533).